Reading from the N-terminus, the 503-residue chain is Maturase K (503 aa).

It belongs to the intron maturase 2 family. MatK subfamily.

It localises to the plastid. It is found in the chloroplast. In terms of biological role, usually encoded in the trnK tRNA gene intron. Probably assists in splicing its own and other chloroplast group II introns. This is Maturase K from Actinodium cunninghamii (Albany daisy).